A 394-amino-acid chain; its full sequence is Actin-related protein 2 (394 aa).

Methionine 1 is subject to N-acetylmethionine. ATP is bound by residues 160 to 162 (GDG) and 214 to 218 (RMIKE). Position 299 is an N6-acetyllysine (lysine 299). 305–310 (GGSTMY) is a binding site for ATP. Lysine 322 bears the N6-acetyllysine mark.

Belongs to the actin family. ARP2 subfamily. In terms of assembly, component of the Arp2/3 complex composed of ACTR2/ARP2, ACTR3/ARP3, ARPC1B/p41-ARC, ARPC2/p34-ARC, ARPC3/p21-ARC, ARPC4/p20-ARC and ARPC5/p16-ARC. Interacts with AVIL.

Its subcellular location is the cytoplasm. It is found in the cytoskeleton. The protein localises to the cell projection. It localises to the nucleus. Its function is as follows. ATP-binding component of the Arp2/3 complex, a multiprotein complex that mediates actin polymerization upon stimulation by nucleation-promoting factor (NPF). The Arp2/3 complex mediates the formation of branched actin networks in the cytoplasm, providing the force for cell motility. Seems to contact the pointed end of the daughter actin filament. In podocytes, required for the formation of lamellipodia downstream of AVIL and PLCE1 regulation. In addition to its role in the cytoplasmic cytoskeleton, the Arp2/3 complex also promotes actin polymerization in the nucleus, thereby regulating gene transcription and repair of damaged DNA. The Arp2/3 complex promotes homologous recombination (HR) repair in response to DNA damage by promoting nuclear actin polymerization, leading to drive motility of double-strand breaks (DSBs). This Pongo abelii (Sumatran orangutan) protein is Actin-related protein 2 (ACTR2).